A 477-amino-acid chain; its full sequence is Sucrose-6-phosphate hydrolase (477 aa).

Residues 36-39 (WMND), Gln55, Trp63, 98-99 (FS), 160-161 (RD), Glu215, and Trp298 contribute to the substrate site. Asp39 is an active-site residue.

It belongs to the glycosyl hydrolase 32 family.

The protein resides in the cytoplasm. The enzyme catalyses Hydrolysis of terminal non-reducing beta-D-fructofuranoside residues in beta-D-fructofuranosides.. It participates in glycan biosynthesis; sucrose metabolism. Functionally, enables the bacterium to metabolize sucrose as a sole carbon source. The chain is Sucrose-6-phosphate hydrolase (cscA) from Escherichia coli.